The sequence spans 187 residues: Pseudo histidine-containing phosphotransfer protein 1 (187 aa).

One can recognise an HPt domain in the interval 74-169; it reads SPNFVEEVVT…AVLRQKLESY (96 aa).

In terms of biological role, functions as a two-component phosphorelay mediator between cytokinin sensor histidine kinases and response regulators (B-type ARRs). Plays an important role in propagating cytokinin signal transduction. This Oryza sativa subsp. japonica (Rice) protein is Pseudo histidine-containing phosphotransfer protein 1.